The sequence spans 245 residues: Derlin-1 (245 aa).

Topologically, residues 1-5 (MDLEN) are cytoplasmic. Residues 6–26 (FLLGIPIVTRYWFLASTIIPL) traverse the membrane as a helical segment. Residues 27 to 57 (LGRFGFINVQWMFLQWDLVVNKFQFWRPLTA) lie on the Lumenal side of the membrane. A helical transmembrane segment spans residues 58–78 (LIYYPVTPQTGFHWLMMCYFL). Topologically, residues 79–100 (YNYSKALESETYRGRSADYLFM) are cytoplasmic. Residues 101-121 (LIFNWFFCSGLCMALDIYFLL) form a helical membrane-spanning segment. The Lumenal portion of the chain corresponds to 122-166 (EPMVISVLYVWCQVNKDTIVSFWFGMRFPARYLPWVLWGFNAVLR). A helical membrane pass occupies residues 167 to 187 (GGGTNELVGILVGHAYFFVAL). Residues 188 to 245 (KYPDEYGVDLISTPEFLHRLIPDEDGGIHGQDGNIRGARQQPRGHQWPGGVGARLGGN) are Cytoplasmic-facing. The interval 218 to 245 (QDGNIRGARQQPRGHQWPGGVGARLGGN) is disordered. Positions 234–245 (WPGGVGARLGGN) are enriched in gly residues.

This sequence belongs to the derlin family.

It localises to the endoplasmic reticulum membrane. In terms of biological role, specifically required for the degradation process of misfolded endoplasmic reticulum (ER) luminal proteins. Participates in the transfer of misfolded proteins from the ER to the cytosol, where they are destroyed by the proteasome in a ubiquitin-dependent manner. The chain is Derlin-1 from Caenorhabditis elegans.